The following is a 324-amino-acid chain: Probable peptidylglycine alpha-hydroxylating monooxygenase 1 (324 aa).

The signal sequence occupies residues 1-22 (MPRFYLLSSCALLAFATSFCNA). 2 disulfides stabilise this stretch: cysteine 41/cysteine 85 and cysteine 73/cysteine 101. Histidine 66 and histidine 67 together coordinate Cu cation. Histidine 142 lines the Cu cation pocket. An N-linked (GlcNAc...) asparagine glycan is attached at asparagine 182. The Cu cation site is built by histidine 207, histidine 209, and methionine 284. Cysteine 264 and cysteine 285 form a disulfide bridge.

The protein belongs to the copper type II ascorbate-dependent monooxygenase family. It depends on Cu(2+) as a cofactor.

It localises to the secreted. The enzyme catalyses a [peptide]-C-terminal glycine + 2 L-ascorbate + O2 = a [peptide]-C-terminal (2S)-2-hydroxyglycine + 2 monodehydro-L-ascorbate radical + H2O. In terms of biological role, monooxygenase that catalyzes an essential reaction in C-terminal alpha-amidation of peptides. Produces an unstable peptidyl(2-hydroxyglycine) intermediate. C-terminal amidation of peptides such as neuropeptides is essential for full biological activity. The protein is Probable peptidylglycine alpha-hydroxylating monooxygenase 1 of Caenorhabditis elegans.